The sequence spans 167 residues: Protein archease (167 aa).

Ala2 carries the N-acetylalanine modification. Ca(2+) is bound by residues Asp39, Asp166, and Ile167.

Belongs to the archease family. Component of the tRNA-splicing ligase complex.

Functionally, component of the tRNA-splicing ligase complex required to facilitate the enzymatic turnover of catalytic subunit RTCB. Together with DDX1, acts by facilitating the guanylylation of RTCB, a key intermediate step in tRNA ligation. This is Protein archease (ZBTB8OS) from Homo sapiens (Human).